The chain runs to 69 residues: Protein hunchback (69 aa).

C2H2-type zinc fingers lie at residues 1–11 (KHHLEYHLRNH), 17–39 (FKCE…LKSH), and 45–69 (YRCA…KYSH).

This sequence belongs to the hunchback C2H2-type zinc-finger protein family.

It is found in the nucleus. Gap class segmentation protein that controls development of head structures. The chain is Protein hunchback (hb) from Apis mellifera (Honeybee).